A 326-amino-acid chain; its full sequence is ELMO domain-containing protein 1 (326 aa).

The ELMO domain occupies 133-306; the sequence is QHEEMLLKLW…KFRKRIIKQL (174 aa).

Its function is as follows. Acts as a GTPase-activating protein (GAP) toward guanine nucleotide exchange factors like ARL2, ARL3, ARF1 and ARF6, but not for GTPases outside the Arf family. This Mus musculus (Mouse) protein is ELMO domain-containing protein 1 (Elmod1).